The sequence spans 697 residues: Elongation factor G (697 aa).

One can recognise a tr-type G domain in the interval 8 to 282 (ENTRNIGIMA…AIVDYMPSPV (275 aa)). Residues 17–24 (AHIDAGKT), 81–85 (DTPGH), and 135–138 (NKMD) contribute to the GTP site.

The protein belongs to the TRAFAC class translation factor GTPase superfamily. Classic translation factor GTPase family. EF-G/EF-2 subfamily.

The protein localises to the cytoplasm. Its function is as follows. Catalyzes the GTP-dependent ribosomal translocation step during translation elongation. During this step, the ribosome changes from the pre-translocational (PRE) to the post-translocational (POST) state as the newly formed A-site-bound peptidyl-tRNA and P-site-bound deacylated tRNA move to the P and E sites, respectively. Catalyzes the coordinated movement of the two tRNA molecules, the mRNA and conformational changes in the ribosome. This is Elongation factor G from Acetivibrio thermocellus (strain ATCC 27405 / DSM 1237 / JCM 9322 / NBRC 103400 / NCIMB 10682 / NRRL B-4536 / VPI 7372) (Clostridium thermocellum).